The following is a 266-amino-acid chain: Glucosamine-6-phosphate deaminase (266 aa).

Residue aspartate 72 is the Proton acceptor; for enolization step of the active site. Residue aspartate 141 is the For ring-opening step of the active site. Histidine 143 acts as the Proton acceptor; for ring-opening step in catalysis. Glutamate 148 serves as the catalytic For ring-opening step.

It belongs to the glucosamine/galactosamine-6-phosphate isomerase family. NagB subfamily. As to quaternary structure, homohexamer.

The catalysed reaction is alpha-D-glucosamine 6-phosphate + H2O = beta-D-fructose 6-phosphate + NH4(+). It participates in amino-sugar metabolism; N-acetylneuraminate degradation; D-fructose 6-phosphate from N-acetylneuraminate: step 5/5. With respect to regulation, allosterically activated by N-acetylglucosamine 6-phosphate (GlcNAc6P). Functionally, catalyzes the reversible isomerization-deamination of glucosamine 6-phosphate (GlcN6P) to form fructose 6-phosphate (Fru6P) and ammonium ion. This Yersinia enterocolitica serotype O:8 / biotype 1B (strain NCTC 13174 / 8081) protein is Glucosamine-6-phosphate deaminase.